Here is a 1366-residue protein sequence, read N- to C-terminus: ABC multidrug transporter MDR2 (1366 aa).

The helical transmembrane segment at 52 to 72 (IALIVIGTIAGIGAGIPFPLL) threads the bilayer. An ABC transmembrane type-1 1 domain is found at 56–354 (VIGTIAGIGA…MAPFMHIFAS (299 aa)). Asn-84 is a glycosylation site (N-linked (GlcNAc...) asparagine). Helical transmembrane passes span 106-126 (VLQV…HTGC), 180-200 (KVGL…VAFL), 202-222 (VATI…MAFG), 288-308 (IQFG…FWQG), and 323-343 (VSVG…FVLS). The ABC transporter 1 domain occupies 390–669 (IELQDVTFNY…DGVYAGMVRL (280 aa)). An ATP-binding site is contributed by 425-432 (GTSGSGKS). The N-linked (GlcNAc...) asparagine glycan is linked to Asn-620. The tract at residues 727–746 (PEEADSLPTEPEAKKEKPKQ) is disordered. Helical transmembrane passes span 768–788 (LGLI…VIFG), 807–827 (GMLF…AVIV), 868–888 (LLVA…GTTI), and 898–918 (LFAG…VLLA). One can recognise an ABC transmembrane type-1 2 domain in the interval 768 to 1055 (LGLITSIMIG…MFALVPDISK (288 aa)). Asn-976 carries an N-linked (GlcNAc...) asparagine glycan. A run of 2 helical transmembrane segments spans residues 995-1015 (FWLS…YWWG) and 1019-1039 (ILAG…LLFS). In terms of domain architecture, ABC transporter 2 spans 1122 to 1361 (VQFRNVHFRY…CESYRANVIH (240 aa)). 1157–1164 (GPSGSGKS) contacts ATP.

This sequence belongs to the ABC transporter superfamily. ABCB family. Multidrug resistance exporter (TC 3.A.1.201) subfamily.

Its subcellular location is the cell membrane. Functionally, pleiotropic ABC efflux transporter that may be involved in the modulation susceptibility to a wide range of unrelated cytotoxic compounds. Does not act as an efflux pump for azoles, including fluconazole, itraconazole, ketoconazole, miconazole and voriconazole, nor does it modulate susceptibility to cycloheximide. The polypeptide is ABC multidrug transporter MDR2 (Trichophyton rubrum (strain ATCC MYA-4607 / CBS 118892) (Athlete's foot fungus)).